A 108-amino-acid polypeptide reads, in one-letter code: DNA-binding protein HBbu (108 aa).

It belongs to the bacterial histone-like protein family.

Its function is as follows. Histone-like DNA-binding protein which is capable of wrapping DNA to stabilize it, and thus to prevent its denaturation under extreme environmental conditions. The polypeptide is DNA-binding protein HBbu (hbb) (Borreliella japonica (Borrelia japonica)).